A 278-amino-acid chain; its full sequence is uncharacterized protein (278 aa).

This is an uncharacterized protein from Escherichia coli (strain K12).